A 243-amino-acid chain; its full sequence is UTP--glucose-1-phosphate uridylyltransferase AglF (243 aa).

Belongs to the UDPGP type 2 family.

The enzyme catalyses alpha-D-glucose 1-phosphate + UTP + H(+) = UDP-alpha-D-glucose + diphosphate. It participates in cell surface structure biogenesis; S-layer biogenesis. Its function is as follows. Involved in the assembly of a N-linked pentasaccharide that decorates the S-layer glycoprotein and flagellins. Involved in the biosynthesis of the hexuronic acid found at position 3 of the pentasaccharide. This is UTP--glucose-1-phosphate uridylyltransferase AglF (aglF) from Haloferax volcanii (strain ATCC 29605 / DSM 3757 / JCM 8879 / NBRC 14742 / NCIMB 2012 / VKM B-1768 / DS2) (Halobacterium volcanii).